The sequence spans 61 residues: Small ribosomal subunit protein uS14 (61 aa).

Positions 24, 27, 40, and 43 each coordinate Zn(2+).

Belongs to the universal ribosomal protein uS14 family. Zinc-binding uS14 subfamily. Part of the 30S ribosomal subunit. Contacts proteins S3 and S10. It depends on Zn(2+) as a cofactor.

In terms of biological role, binds 16S rRNA, required for the assembly of 30S particles and may also be responsible for determining the conformation of the 16S rRNA at the A site. In Treponema denticola (strain ATCC 35405 / DSM 14222 / CIP 103919 / JCM 8153 / KCTC 15104), this protein is Small ribosomal subunit protein uS14.